A 94-amino-acid chain; its full sequence is Large ribosomal subunit protein bL25 (94 aa).

This sequence belongs to the bacterial ribosomal protein bL25 family. As to quaternary structure, part of the 50S ribosomal subunit; part of the 5S rRNA/L5/L18/L25 subcomplex. Contacts the 5S rRNA. Binds to the 5S rRNA independently of L5 and L18.

This is one of the proteins that binds to the 5S RNA in the ribosome where it forms part of the central protuberance. The chain is Large ribosomal subunit protein bL25 from Salmonella agona (strain SL483).